The chain runs to 583 residues: R-linalool synthase QH5, chloroplastic (583 aa).

Residues 1 to 40 (MASISLFPYSILKQTSPLARGTAYNRIYSTKTTGITVDVA) constitute a chloroplast transit peptide. (2E)-geranyl diphosphate is bound by residues R298, D335, D339, R476, and D479. Mg(2+)-binding residues include D335 and D339. The DDXXD motif motif lies at 335–339 (DDVYD). 3 residues coordinate Mg(2+): D479, T483, and E487. Residue D492 coordinates K(+).

Belongs to the terpene synthase family. Tpsb subfamily. It depends on Mg(2+) as a cofactor. Requires Mn(2+) as cofactor. K(+) serves as cofactor. As to expression, expressed in every aerial organ except for the stem stele of mature plants. Not detected in roots.

It localises to the plastid. The protein resides in the chloroplast. The catalysed reaction is (2E)-geranyl diphosphate + H2O = (R)-linalool + diphosphate. It participates in secondary metabolite biosynthesis; terpenoid biosynthesis. Its function is as follows. Monoterpene synthase that catalyzes the formation of (3R)-linalool from geranyl diphosphate, but not from isopentenyl diphosphate, dimethylallyl diphosphate, chrysanthemyl diphosphate, farnesyl diphosphate, (+)-copalyl diphosphate or geranylgeranyl diphosphate. In Artemisia annua (Sweet wormwood), this protein is R-linalool synthase QH5, chloroplastic.